Reading from the N-terminus, the 410-residue chain is Phosphopentomutase (410 aa).

Mn(2+)-binding residues include Asp10, Asp309, His314, Asp350, His351, and His362.

Belongs to the phosphopentomutase family. Requires Mn(2+) as cofactor.

The protein resides in the cytoplasm. It catalyses the reaction 2-deoxy-alpha-D-ribose 1-phosphate = 2-deoxy-D-ribose 5-phosphate. The enzyme catalyses alpha-D-ribose 1-phosphate = D-ribose 5-phosphate. Its pathway is carbohydrate degradation; 2-deoxy-D-ribose 1-phosphate degradation; D-glyceraldehyde 3-phosphate and acetaldehyde from 2-deoxy-alpha-D-ribose 1-phosphate: step 1/2. Functionally, isomerase that catalyzes the conversion of deoxy-ribose 1-phosphate (dRib-1-P) and ribose 1-phosphate (Rib-1-P) to deoxy-ribose 5-phosphate (dRib-5-P) and ribose 5-phosphate (Rib-5-P), respectively. This Aliivibrio fischeri (strain ATCC 700601 / ES114) (Vibrio fischeri) protein is Phosphopentomutase.